A 93-amino-acid chain; its full sequence is Peptide YY-like (93 aa).

Positions 1 to 27 are cleaved as a signal peptide; it reads MVSPRVRLAALALSVCAILCLGMHASA. Tyrosine amide is present on Y63. Residues 65-93 constitute a propeptide, C-terminal extension; sequence KRALTPENWIYRDPAEERVTYGLDDYAMW.

The protein belongs to the NPY family. Gut and medial reticulospinal neuron system in the brainstem.

The protein localises to the secreted. Its function is as follows. Gastrointestinal hormone and neuropeptide. This Lampetra fluviatilis (European river lamprey) protein is Peptide YY-like (pyy).